A 109-amino-acid polypeptide reads, in one-letter code: uncharacterized protein (109 aa).

It localises to the mitochondrion. This is an uncharacterized protein from Marchantia polymorpha (Common liverwort).